The chain runs to 476 residues: Protein THYLAKOID RHODANESE-LIKE, chloroplastic (476 aa).

The transit peptide at Met1 to Arg21 directs the protein to the chloroplast. A disordered region spans residues Met1–Ala29. Low complexity predominate over residues Ala11–Arg21. The transit peptide at Ala22 to Pro58 directs the protein to the thylakoid. Residues Leu100–Gly120 form a helical membrane-spanning segment. The region spanning Glu140 to Ala246 is the Rhodanese domain. 2 helical membrane-spanning segments follow: residues Leu264–Ile284 and Val287–Ala307. Positions Leu342–Pro476 are disordered. The segment covering Pro351–Ala389 has biased composition (low complexity). Residues Leu403–Leu412 show a composition bias toward pro residues. The span at Glu425–Glu446 shows a compositional bias: low complexity. The span at Ala447–Pro476 shows a compositional bias: pro residues.

Component of high molecular weight thylakoid LFNRs-containing protein complexes containing LIR1, LFNR1, LFNR2, TIC62 and TROL proteins.

The protein resides in the plastid. It is found in the chloroplast thylakoid membrane. Rhodanese domain-containing protein required for anchoring ferredoxin--NADP reductase to the thylakoid membranes and sustaining efficient linear electron flow (LEF). The sequence is that of Protein THYLAKOID RHODANESE-LIKE, chloroplastic from Oryza sativa subsp. indica (Rice).